A 210-amino-acid chain; its full sequence is Imidazoleglycerol-phosphate dehydratase (210 aa).

This sequence belongs to the imidazoleglycerol-phosphate dehydratase family.

The enzyme catalyses D-erythro-1-(imidazol-4-yl)glycerol 3-phosphate = 3-(imidazol-4-yl)-2-oxopropyl phosphate + H2O. It functions in the pathway amino-acid biosynthesis; L-histidine biosynthesis; L-histidine from 5-phospho-alpha-D-ribose 1-diphosphate: step 6/9. The chain is Imidazoleglycerol-phosphate dehydratase (HIS3) from Candida glabrata (strain ATCC 2001 / BCRC 20586 / JCM 3761 / NBRC 0622 / NRRL Y-65 / CBS 138) (Yeast).